Consider the following 667-residue polypeptide: Transketolase (667 aa).

Histidine 27 contacts substrate. Thiamine diphosphate-binding positions include histidine 67 and 115 to 117; that span reads GPL. Residue aspartate 156 participates in Mg(2+) binding. Glycine 157 and asparagine 186 together coordinate thiamine diphosphate. Positions 186 and 188 each coordinate Mg(2+). 3 residues coordinate substrate: histidine 262, arginine 357, and serine 384. Residue histidine 262 participates in thiamine diphosphate binding. The active-site Proton donor is glutamate 411. Phenylalanine 437 is a thiamine diphosphate binding site. Residues histidine 461, aspartate 469, and arginine 520 each contribute to the substrate site.

It belongs to the transketolase family. As to quaternary structure, homodimer. It depends on Mg(2+) as a cofactor. Ca(2+) serves as cofactor. Mn(2+) is required as a cofactor. The cofactor is Co(2+). Requires thiamine diphosphate as cofactor.

It catalyses the reaction D-sedoheptulose 7-phosphate + D-glyceraldehyde 3-phosphate = aldehydo-D-ribose 5-phosphate + D-xylulose 5-phosphate. Functionally, catalyzes the transfer of a two-carbon ketol group from a ketose donor to an aldose acceptor, via a covalent intermediate with the cofactor thiamine pyrophosphate. The sequence is that of Transketolase (tkt) from Bacillus subtilis (strain 168).